The following is a 135-amino-acid chain: MLMPKRVKYRKNHLPHIKGKETRGLKLAFGDYGIQAVGRGYVDSRMIESCRVIMAKNIGKTGKYWIRIFPDVAWTKKPLEVRMGGGKGDPEKWIFPVKPGRIMFELTGVDEDTAKHIARLIGFRLPFEVRLISRV.

This sequence belongs to the universal ribosomal protein uL16 family. Part of the 50S ribosomal subunit.

Binds 23S rRNA and is also seen to make contacts with the A and possibly P site tRNAs. This is Large ribosomal subunit protein uL16 from Coprothermobacter proteolyticus (strain ATCC 35245 / DSM 5265 / OCM 4 / BT).